Reading from the N-terminus, the 407-residue chain is NAD(P)H-quinone oxidoreductase subunit 1 (407 aa).

9 helical membrane passes run 28 to 48, 96 to 116, 127 to 147, 175 to 195, 203 to 223, 267 to 287, 309 to 329, 347 to 367, and 374 to 394; these read WLPLPMIVILLTVTVGVIAAV, WLFTLGPAIVIIPVFFSYLVI, ITIGIFFIIAVASISPIGALM, LALSVLAIVMMSSSLSTVDIV, LFSFFSWNIWRQPIGFVIFLI, LILASLIASVLFLGGWSFIVP, ALVGISVTILKATFFVFLAIL, WKFLLPVSLFNLLLTAALVLL, and TLPLYLPLIIFVGLVFVAMSL.

It belongs to the complex I subunit 1 family. NDH-1 is composed of at least 11 different subunits.

Its subcellular location is the cell inner membrane. The catalysed reaction is a plastoquinone + NADH + (n+1) H(+)(in) = a plastoquinol + NAD(+) + n H(+)(out). The enzyme catalyses a plastoquinone + NADPH + (n+1) H(+)(in) = a plastoquinol + NADP(+) + n H(+)(out). Its function is as follows. NDH-1 shuttles electrons from an unknown electron donor, via FMN and iron-sulfur (Fe-S) centers, to quinones in the respiratory and/or the photosynthetic chain. The immediate electron acceptor for the enzyme in this species is believed to be plastoquinone. Couples the redox reaction to proton translocation, and thus conserves the redox energy in a proton gradient. The sequence is that of NAD(P)H-quinone oxidoreductase subunit 1 from Gloeobacter violaceus (strain ATCC 29082 / PCC 7421).